Consider the following 622-residue polypeptide: Leucine-rich repeat-containing protein 70 (622 aa).

Residues 1–31 form the signal peptide; that stretch reads MCGLQFSLPCLRLFLVVTCYLLLLLHKEILG. Residues 32–60 form the LRRNT domain; sequence CSSVCQLCTGRQINCRNLGLSSIPKNFPE. 12 LRR repeats span residues 61–82, 85–106, 109–130, 133–154, 157–178, 181–202, 205–226, 229–250, 253–274, 277–298, 301–322, and 326–347; these read STVF…ELTG, SLVA…AFVQ, HLYF…IFKG, NLRN…VFND, SVQY…TFVG, ALRI…GFQH, NLAC…AFEV, SLRR…AFKG, NLEY…GFSG, NLKH…TFSL, NLIY…TFEN, and SLKI…VLKP. A glycan (N-linked (GlcNAc...) asparagine) is linked at Asn215. Asn266 carries an N-linked (GlcNAc...) asparagine glycan. N-linked (GlcNAc...) asparagine glycosylation is found at Asn331 and Asn400. The LRRCT domain occupies 359–406; sequence NPWECNCKLLGLRDWLASSAITLNIYCQNPPSMRGRALRYINITNCVT. The chain crosses the membrane as a helical span at residues 527 to 547; that stretch reads AFDILLAFFILACVLIIFLIY.

In terms of tissue distribution, expressed at low levels in many tissues, including smooth muscle, brain, uterus, pancreas, cartilage, adipose, spleen and testis.

It is found in the membrane. Renders cells highly sensitive to the activation by cytokines and lipopolysaccharide (LPS). In Homo sapiens (Human), this protein is Leucine-rich repeat-containing protein 70 (LRRC70).